A 230-amino-acid chain; its full sequence is Ly6/PLAUR domain-containing protein 8 (230 aa).

The signal sequence occupies residues M1–T20. N37, N44, N74, N77, N90, N106, N110, N132, N137, N156, N168, N181, and N197 each carry an N-linked (GlcNAc...) asparagine glycan. One can recognise a UPAR/Ly6 domain in the interval C125–S172. S211 carries GPI-anchor amidated serine lipidation. The propeptide at Q212–L230 is removed in mature form.

The protein belongs to the CNF-like-inhibitor family. In terms of processing, highly N-glycosylated. Not O-glycosylated. Post-translationally, GPI-anchored. The GPI-anchor is cleaved, leading to secretion into the colonic lumen.

The protein resides in the cell membrane. Its subcellular location is the secreted. Functionally, secreted protein specifically required to prevent invasion of Gram-negative bacteria in the inner mucus layer of the colon epithelium, a portion of the large intestine which is free of commensal microbiota. Prevents invasion of flagellated microbiota by binding to the flagellum of bacteria, such as P.mirabilis, thereby inhibiting bacterial motility in the intestinal lumen. Segregation of intestinal bacteria and epithelial cells in the colon is required to preserve intestinal homeostasis. The sequence is that of Ly6/PLAUR domain-containing protein 8 (LYPD8) from Bos taurus (Bovine).